The sequence spans 806 residues: Leucine--tRNA ligase (806 aa).

Positions 40–51 (PYPSGSGLHVGH) match the 'HIGH' region motif. The 'KMSKS' region motif lies at 576-580 (KMSKS). K579 contacts ATP.

The protein belongs to the class-I aminoacyl-tRNA synthetase family.

It is found in the cytoplasm. It catalyses the reaction tRNA(Leu) + L-leucine + ATP = L-leucyl-tRNA(Leu) + AMP + diphosphate. This Chlorobium phaeobacteroides (strain BS1) protein is Leucine--tRNA ligase.